The sequence spans 540 residues: CTP synthase (540 aa).

Positions 1–270 are amidoligase domain; sequence MNNLTSTKFI…DTQILKHFNI (270 aa). S18 lines the CTP pocket. S18 lines the UTP pocket. ATP contacts are provided by residues 19–24 and D76; that span reads SLGKGL. The Mg(2+) site is built by D76 and E144. Residues 151 to 153, 191 to 196, and K227 contribute to the CTP site; these read DIE and KTKPTQ. UTP is bound by residues 191 to 196 and K227; that span reads KTKPTQ. A Glutamine amidotransferase type-1 domain is found at 295–537; that stretch reads TIAIIGKYIK…VQASLNYQET (243 aa). G356 provides a ligand contact to L-glutamine. C383 acts as the Nucleophile; for glutamine hydrolysis in catalysis. L-glutamine contacts are provided by residues 384–387, E407, and R462; that span reads MGMQ. Active-site residues include H510 and E512.

It belongs to the CTP synthase family. As to quaternary structure, homotetramer.

It carries out the reaction UTP + L-glutamine + ATP + H2O = CTP + L-glutamate + ADP + phosphate + 2 H(+). It catalyses the reaction L-glutamine + H2O = L-glutamate + NH4(+). The catalysed reaction is UTP + NH4(+) + ATP = CTP + ADP + phosphate + 2 H(+). The protein operates within pyrimidine metabolism; CTP biosynthesis via de novo pathway; CTP from UDP: step 2/2. With respect to regulation, allosterically activated by GTP, when glutamine is the substrate; GTP has no effect on the reaction when ammonia is the substrate. The allosteric effector GTP functions by stabilizing the protein conformation that binds the tetrahedral intermediate(s) formed during glutamine hydrolysis. Inhibited by the product CTP, via allosteric rather than competitive inhibition. Catalyzes the ATP-dependent amination of UTP to CTP with either L-glutamine or ammonia as the source of nitrogen. Regulates intracellular CTP levels through interactions with the four ribonucleotide triphosphates. This is CTP synthase from Ehrlichia ruminantium (strain Welgevonden).